The following is a 163-amino-acid chain: Peptide methionine sulfoxide reductase MsrA (163 aa).

Cys-10 is an active-site residue.

The protein belongs to the MsrA Met sulfoxide reductase family.

The catalysed reaction is L-methionyl-[protein] + [thioredoxin]-disulfide + H2O = L-methionyl-(S)-S-oxide-[protein] + [thioredoxin]-dithiol. It catalyses the reaction [thioredoxin]-disulfide + L-methionine + H2O = L-methionine (S)-S-oxide + [thioredoxin]-dithiol. In terms of biological role, has an important function as a repair enzyme for proteins that have been inactivated by oxidation. Catalyzes the reversible oxidation-reduction of methionine sulfoxide in proteins to methionine. This is Peptide methionine sulfoxide reductase MsrA from Ruthia magnifica subsp. Calyptogena magnifica.